A 377-amino-acid chain; its full sequence is Delta(12) fatty acid desaturase DES8.11 (377 aa).

The next 2 membrane-spanning stretches (helical) occupy residues 55 to 75 and 79 to 99; these read LIVAYVFYYLANTYIPLIPTP and LAWPVYWFCQASILTGLWVIG. The Histidine box-1 signature appears at 100–104; that stretch reads HECGH. Residues 112-132 traverse the membrane as a helical segment; that stretch reads LIDDIVGFVLHSALLTPYFSW. Residues 136-140 carry the Histidine box-2 motif; the sequence is HRNHH. 3 helical membrane-spanning segments follow: residues 174-194, 220-240, and 244-264; these read VFTLVFRLTLGFPLYLLTNIS, VLLSDFGLLAVFYAIKLLVAA, and AWVINMYAIPVLGVSVFFVLI. Residues 310 to 314 carry the Histidine box-3 motif; it reads HVLHH.

This sequence belongs to the fatty acid desaturase type 1 family.

It is found in the membrane. It functions in the pathway lipid metabolism; polyunsaturated fatty acid biosynthesis. Its function is as follows. Converts linoleic acid into a conjugated octadecatrienoic acid, probably calendic acid. This chain is Delta(12) fatty acid desaturase DES8.11, found in Calendula officinalis (Pot marigold).